Reading from the N-terminus, the 816-residue chain is Leucine--tRNA ligase (816 aa).

The 'HIGH' region motif lies at 40–51 (PYPSGSGLHVGH). The short motif at 576–580 (KMSKS) is the 'KMSKS' region element. Lys579 serves as a coordination point for ATP.

This sequence belongs to the class-I aminoacyl-tRNA synthetase family.

Its subcellular location is the cytoplasm. It carries out the reaction tRNA(Leu) + L-leucine + ATP = L-leucyl-tRNA(Leu) + AMP + diphosphate. The sequence is that of Leucine--tRNA ligase from Chlorobium phaeobacteroides (strain DSM 266 / SMG 266 / 2430).